The sequence spans 546 residues: Chaperonin GroEL (546 aa).

Residues 30-33 (TLGP), Lys51, 87-91 (DGTTT), Gly415, 479-481 (NAA), and Asp495 contribute to the ATP site.

The protein belongs to the chaperonin (HSP60) family. As to quaternary structure, forms a cylinder of 14 subunits composed of two heptameric rings stacked back-to-back. Interacts with the co-chaperonin GroES.

It is found in the cytoplasm. The catalysed reaction is ATP + H2O + a folded polypeptide = ADP + phosphate + an unfolded polypeptide.. Functionally, together with its co-chaperonin GroES, plays an essential role in assisting protein folding. The GroEL-GroES system forms a nano-cage that allows encapsulation of the non-native substrate proteins and provides a physical environment optimized to promote and accelerate protein folding. The polypeptide is Chaperonin GroEL (Azotobacter vinelandii).